Consider the following 220-residue polypeptide: Zinc finger protein 36 (220 aa).

The C2H2-type 1 zinc-finger motif lies at 73–95; sequence FRCTVCGKAFASYQALGGHKSSH. The tract at residues 90–134 is disordered; that stretch reads GHKSSHRKPPSPGDHYGAAAAAQQLASAGDSKEDSASSAAGSTGP. Over residues 107-117 the composition is skewed to low complexity; it reads AAAAAQQLASA. The segment at 135 to 157 adopts a C2H2-type 2 zinc-finger fold; that stretch reads HRCTICRRSFATGQALGGHKRCH.

Functionally, probable transcription factor involved in abscisic acid (ABA) signaling. Required for the regulation of the cross-talk between NADPH oxidase, hydrogen peroxide and MAP kinase in ABA signaling. Regulates the expression of the NADPH oxidase genes RBOHB and RBOHE, and the MAPK genes MPK1, MPK4, MPK5, MPK7 and MPK14. Regulates ABA-induced hydrogen peroxide production and antioxidant defense. Required for tolerance to water stress and oxidative stress. The sequence is that of Zinc finger protein 36 from Oryza sativa subsp. japonica (Rice).